Here is a 251-residue protein sequence, read N- to C-terminus: Ubiquinone/menaquinone biosynthesis C-methyltransferase UbiE (251 aa).

Residues Thr74, Asp95, 123 to 124 (NA), and Ser140 contribute to the S-adenosyl-L-methionine site.

The protein belongs to the class I-like SAM-binding methyltransferase superfamily. MenG/UbiE family.

The catalysed reaction is a 2-demethylmenaquinol + S-adenosyl-L-methionine = a menaquinol + S-adenosyl-L-homocysteine + H(+). It catalyses the reaction a 2-methoxy-6-(all-trans-polyprenyl)benzene-1,4-diol + S-adenosyl-L-methionine = a 5-methoxy-2-methyl-3-(all-trans-polyprenyl)benzene-1,4-diol + S-adenosyl-L-homocysteine + H(+). It participates in quinol/quinone metabolism; menaquinone biosynthesis; menaquinol from 1,4-dihydroxy-2-naphthoate: step 2/2. It functions in the pathway cofactor biosynthesis; ubiquinone biosynthesis. Functionally, methyltransferase required for the conversion of demethylmenaquinol (DMKH2) to menaquinol (MKH2) and the conversion of 2-polyprenyl-6-methoxy-1,4-benzoquinol (DDMQH2) to 2-polyprenyl-3-methyl-6-methoxy-1,4-benzoquinol (DMQH2). This is Ubiquinone/menaquinone biosynthesis C-methyltransferase UbiE from Citrobacter koseri (strain ATCC BAA-895 / CDC 4225-83 / SGSC4696).